The sequence spans 337 residues: Ketol-acid reductoisomerase (NADP(+)) (337 aa).

Residues 1 to 180 (MKIYYDTDVN…GGGRAGIIET (180 aa)) enclose the KARI N-terminal Rossmann domain. Residues 24 to 27 (YGSQ), Arg-47, Ser-51, and 81 to 84 (DELQ) contribute to the NADP(+) site. His-106 is a catalytic residue. NADP(+) is bound at residue Gly-132. The 146-residue stretch at 181-326 (TFKDETETDL…EKLRAMMPWL (146 aa)) folds into the KARI C-terminal knotted domain. Residues Asp-189, Glu-193, Glu-225, and Glu-229 each coordinate Mg(2+). Substrate is bound at residue Ser-250.

Belongs to the ketol-acid reductoisomerase family. Mg(2+) is required as a cofactor.

It carries out the reaction (2R)-2,3-dihydroxy-3-methylbutanoate + NADP(+) = (2S)-2-acetolactate + NADPH + H(+). The catalysed reaction is (2R,3R)-2,3-dihydroxy-3-methylpentanoate + NADP(+) = (S)-2-ethyl-2-hydroxy-3-oxobutanoate + NADPH + H(+). Its pathway is amino-acid biosynthesis; L-isoleucine biosynthesis; L-isoleucine from 2-oxobutanoate: step 2/4. It functions in the pathway amino-acid biosynthesis; L-valine biosynthesis; L-valine from pyruvate: step 2/4. In terms of biological role, involved in the biosynthesis of branched-chain amino acids (BCAA). Catalyzes an alkyl-migration followed by a ketol-acid reduction of (S)-2-acetolactate (S2AL) to yield (R)-2,3-dihydroxy-isovalerate. In the isomerase reaction, S2AL is rearranged via a Mg-dependent methyl migration to produce 3-hydroxy-3-methyl-2-ketobutyrate (HMKB). In the reductase reaction, this 2-ketoacid undergoes a metal-dependent reduction by NADPH to yield (R)-2,3-dihydroxy-isovalerate. In Thermodesulfovibrio yellowstonii (strain ATCC 51303 / DSM 11347 / YP87), this protein is Ketol-acid reductoisomerase (NADP(+)).